Here is a 337-residue protein sequence, read N- to C-terminus: Probable phospholipase A1 magnifin (337 aa).

Positions 1–21 are cleaved as a signal peptide; sequence MNLKYLLLFFCLVQVLHYCYS. A propeptide spanning residues 22–33 is cleaved from the precursor; sequence HGDPSLSNELDR. An intrachain disulfide couples cysteine 39 to cysteine 123. Serine 173 acts as the Nucleophile in catalysis. Aspartate 201 acts as the Charge relay system in catalysis. 2 disulfides stabilise this stretch: cysteine 212–cysteine 217 and cysteine 255–cysteine 264. The active-site Charge relay system is the histidine 266. Disulfide bonds link cysteine 281–cysteine 305, cysteine 282–cysteine 330, and cysteine 298–cysteine 303.

The protein belongs to the AB hydrolase superfamily. Lipase family. As to expression, expressed by the venom gland.

Its subcellular location is the secreted. The catalysed reaction is a 1,2-diacyl-sn-glycero-3-phosphocholine + H2O = a 2-acyl-sn-glycero-3-phosphocholine + a fatty acid + H(+). Functionally, catalyzes the hydrolysis of phosphatidylcholine with phospholipase A1 activity. May act as an allergen and induce hemolytic activity. In vivo, induces dose-dependent platelet aggregation (nanomolar concentration) and induces thrombosis. The protein is Probable phospholipase A1 magnifin of Vespa magnifica (Hornet).